The following is a 298-amino-acid chain: NADH-cytochrome b5 reductase 1 (298 aa).

A helical membrane pass occupies residues 14–34 (VILAGAYLIDPSALPFVAAGV). The 104-residue stretch at 56-159 (KEYRKFKLVD…RGPKGQFSYT (104 aa)) folds into the FAD-binding FR-type domain. Residues 139–154 (SELSIGDSINARGPKG) and 165–197 (AIGMIAGGTGLTPMLQIIRAIVKNPEDKTQVNF) contribute to the FAD site.

Belongs to the flavoprotein pyridine nucleotide cytochrome reductase family. Monomer. Component of the 2-(3-amino-3-carboxypropyl)histidine synthase complex composed of DPH1, DPH2, DPH3 and a NADH-dependent reductase, predominantly CBR1. FAD serves as cofactor.

It is found in the mitochondrion outer membrane. It catalyses the reaction 2 Fe(III)-[cytochrome b5] + NADH = 2 Fe(II)-[cytochrome b5] + NAD(+) + H(+). It carries out the reaction 2 Fe(3+)-[Dph3] + NADH = 2 Fe(2+)-[Dph3] + NAD(+) + H(+). It participates in protein modification; peptidyl-diphthamide biosynthesis. NADH-dependent reductase for DPH3 and cytochrome b5. Required for the first step of diphthamide biosynthesis, a post-translational modification of histidine which occurs in elongation factor 2. DPH1 and DPH2 transfer a 3-amino-3-carboxypropyl (ACP) group from S-adenosyl-L-methionine (SAM) to a histidine residue, the reaction is assisted by a reduction system comprising DPH3 and a NADH-dependent reductase, predominantly CBR1. By reducing DPH3, also involved in the formation of the tRNA wobble base modification mcm5s 2U (5-methoxycarbonylmethyl-2-thiouridine), mediated by the elongator complex. The cytochrome b5/NADH cytochrome b5 reductase electron transfer system supports the catalytic activity of several sterol biosynthetic enzymes. This chain is NADH-cytochrome b5 reductase 1 (CBR1), found in Mortierella alpina (Oleaginous fungus).